The primary structure comprises 90 residues: UPF0512 protein L (90 aa).

This sequence belongs to the UPF0512 family.

The chain is UPF0512 protein L from Dictyostelium discoideum (Social amoeba).